A 432-amino-acid chain; its full sequence is Probable exopolygalacturonase C (432 aa).

A signal peptide spans methionine 1–alanine 20. Asparagine 33, asparagine 73, asparagine 90, and asparagine 140 each carry an N-linked (GlcNAc...) asparagine glycan. 2 PbH1 repeats span residues glycine 206–serine 227 and serine 229–serine 250. Catalysis depends on aspartate 220, which acts as the Proton donor. The active site involves histidine 244. The N-linked (GlcNAc...) asparagine glycan is linked to asparagine 260. The stretch at isoleucine 261–serine 282 is one PbH1 3 repeat. Asparagine 292 and asparagine 302 each carry an N-linked (GlcNAc...) asparagine glycan. Cysteines 377 and 383 form a disulfide. A glycan (N-linked (GlcNAc...) asparagine) is linked at asparagine 407.

Belongs to the glycosyl hydrolase 28 family.

The protein localises to the secreted. The catalysed reaction is [(1-&gt;4)-alpha-D-galacturonosyl](n) + H2O = alpha-D-galacturonate + [(1-&gt;4)-alpha-D-galacturonosyl](n-1). In terms of biological role, specific in hydrolyzing the terminal glycosidic bond of polygalacturonic acid and oligogalacturonates. The polypeptide is Probable exopolygalacturonase C (pgxC) (Aspergillus terreus (strain NIH 2624 / FGSC A1156)).